A 273-amino-acid polypeptide reads, in one-letter code: Dermonecrotic toxin LdSicTox-alphaIB3aiv (273 aa).

Residue histidine 5 is part of the active site. Residues glutamate 25 and aspartate 27 each contribute to the Mg(2+) site. The active-site Nucleophile is the histidine 41. 2 cysteine pairs are disulfide-bonded: cysteine 45–cysteine 51 and cysteine 47–cysteine 190. Aspartate 85 lines the Mg(2+) pocket.

Belongs to the arthropod phospholipase D family. Class II subfamily. Mg(2+) serves as cofactor. In terms of tissue distribution, expressed by the venom gland.

It is found in the secreted. It carries out the reaction an N-(acyl)-sphingosylphosphocholine = an N-(acyl)-sphingosyl-1,3-cyclic phosphate + choline. It catalyses the reaction an N-(acyl)-sphingosylphosphoethanolamine = an N-(acyl)-sphingosyl-1,3-cyclic phosphate + ethanolamine. The catalysed reaction is a 1-acyl-sn-glycero-3-phosphocholine = a 1-acyl-sn-glycero-2,3-cyclic phosphate + choline. The enzyme catalyses a 1-acyl-sn-glycero-3-phosphoethanolamine = a 1-acyl-sn-glycero-2,3-cyclic phosphate + ethanolamine. Dermonecrotic toxins cleave the phosphodiester linkage between the phosphate and headgroup of certain phospholipids (sphingolipid and lysolipid substrates), forming an alcohol (often choline) and a cyclic phosphate. This toxin acts on sphingomyelin (SM). It may also act on ceramide phosphoethanolamine (CPE), lysophosphatidylcholine (LPC) and lysophosphatidylethanolamine (LPE), but not on lysophosphatidylserine (LPS), and lysophosphatidylglycerol (LPG). It acts by transphosphatidylation, releasing exclusively cyclic phosphate products as second products. Induces dermonecrosis, hemolysis, increased vascular permeability, edema, inflammatory response, and platelet aggregation. This Loxosceles deserta (Desert recluse spider) protein is Dermonecrotic toxin LdSicTox-alphaIB3aiv.